The primary structure comprises 74 residues: Small ribosomal subunit protein bS18 (74 aa).

It belongs to the bacterial ribosomal protein bS18 family. In terms of assembly, part of the 30S ribosomal subunit. Forms a tight heterodimer with protein bS6.

Its function is as follows. Binds as a heterodimer with protein bS6 to the central domain of the 16S rRNA, where it helps stabilize the platform of the 30S subunit. The protein is Small ribosomal subunit protein bS18 of Coprothermobacter proteolyticus (strain ATCC 35245 / DSM 5265 / OCM 4 / BT).